The chain runs to 330 residues: Aspartate--ammonia ligase (330 aa).

This sequence belongs to the class-II aminoacyl-tRNA synthetase family. AsnA subfamily.

It localises to the cytoplasm. The catalysed reaction is L-aspartate + NH4(+) + ATP = L-asparagine + AMP + diphosphate + H(+). The protein operates within amino-acid biosynthesis; L-asparagine biosynthesis; L-asparagine from L-aspartate (ammonia route): step 1/1. The chain is Aspartate--ammonia ligase from Streptococcus agalactiae serotype Ia (strain ATCC 27591 / A909 / CDC SS700).